Consider the following 74-residue polypeptide: Psi-conotoxin PrIIIE (74 aa).

The signal sequence occupies residues 1-19 (MSKLGVLLTICLLLFPITA). Positions 20-50 (LPVDGDQPADRPVERMQDNISSEQHPFFEKR) are excised as a propeptide. 3 disulfide bridges follow: Cys54–Cys66, Cys55–Cys71, and Cys61–Cys72. The residue at position 72 (Cys72) is a Cysteine amide.

The protein belongs to the conotoxin M superfamily. In terms of tissue distribution, expressed by the venom duct.

The protein localises to the secreted. Functionally, psi-conotoxins act on postsynaptic membranes, and act as non-competitive antagonist of nicotinic acetylcholine receptors (nAChR). Reversibly inhibits both adult- and fetal-types nAChR. The inhibition potency against the adult- (alpha-1/beta-1/epsilon/delta) is higher than against the fetal-type (alpha-1/beta-1/gamma/delta). Induces flaccid paralysis in goldfish, but does not induce any remarkable behavior in mice and does not block action potential in directly stimulated frog muscle preparations. The sequence is that of Psi-conotoxin PrIIIE from Conus parius (Cone snail).